A 152-amino-acid polypeptide reads, in one-letter code: 3-hydroxyacyl-[acyl-carrier-protein] dehydratase FabZ (152 aa).

The active site involves His58.

This sequence belongs to the thioester dehydratase family. FabZ subfamily.

It is found in the cytoplasm. The enzyme catalyses a (3R)-hydroxyacyl-[ACP] = a (2E)-enoyl-[ACP] + H2O. Involved in unsaturated fatty acids biosynthesis. Catalyzes the dehydration of short chain beta-hydroxyacyl-ACPs and long chain saturated and unsaturated beta-hydroxyacyl-ACPs. The chain is 3-hydroxyacyl-[acyl-carrier-protein] dehydratase FabZ from Prochlorococcus marinus subsp. pastoris (strain CCMP1986 / NIES-2087 / MED4).